The chain runs to 481 residues: G-protein coupled receptor 37-like 1 (481 aa).

The signal sequence occupies residues 1–24; sequence MRWLWPLAVSLAVVLAVGPSEVSG. Residues 25–134 lie on the Extracellular side of the membrane; sequence AATLSLGGHR…ESSYSAYAVM (110 aa). Disordered stretches follow at residues 30-55 and 76-107; these read LGGHRAKVQEQQSRPRRGTKDEGPKE and LQPTKPLVATSPNPDKDGATSESGQELRTNLT. The span at 95–107 shows a compositional bias: polar residues; that stretch reads TSESGQELRTNLT. Asn-105 carries N-linked (GlcNAc...) asparagine glycosylation. Residues 135-155 form a helical membrane-spanning segment; it reads LLALVVFAVGIVGNLSVMCIV. Residues 156–167 lie on the Cytoplasmic side of the membrane; that stretch reads WHSYYLKSAWNS. Residues 168–188 traverse the membrane as a helical segment; sequence ILASLALWDFLVLFFCLPIVI. Topologically, residues 189–205 are extracellular; the sequence is FNEITKQRLLGDVSCRA. A disulfide bond links Cys-203 and Cys-286. Residues 206–226 traverse the membrane as a helical segment; sequence VPFMEVSSLGVTTFSLCALGI. Residues 227–251 are Cytoplasmic-facing; that stretch reads DRFHVATSTLPKVRPIERCQSILAK. The helical transmembrane segment at 252 to 272 threads the bilayer; the sequence is LAVIWVGSMMLAVPELLLWQL. At 273–310 the chain is on the extracellular side; it reads AQEPTPTMGTVDSCIMKPSADLPESLYSLVMTYQNARM. Residues 311-331 traverse the membrane as a helical segment; it reads WWYFGCYFCLPILFTVTCQLV. Residues 332–360 are Cytoplasmic-facing; the sequence is TWRVRGPPGRKPECRAGRHEQCESQLNST. The chain crosses the membrane as a helical span at residues 361–381; that stretch reads VVGLTVVYAFCTLPENICNIV. Over 382 to 398 the chain is Extracellular; it reads VAYLSTELTRQTLDLLG. The helical transmembrane segment at 399–419 threads the bilayer; it reads LINQFSTFFKGAITPVLLLCI. Residues 420–481 are Cytoplasmic-facing; sequence CRPLGQAFLD…PPLLPLGTPC (62 aa). At Ser-471 the chain carries Phosphoserine. Thr-479 bears the Phosphothreonine mark.

The protein belongs to the G-protein coupled receptor 1 family. As to quaternary structure, interacts with the PTCH1 receptor. Undergoes metalloprotease-mediated cleavage which reduces its constitutive activity. In terms of processing, ubiquitinated. Highly expressed in brain.

The protein resides in the cell membrane. It localises to the cell projection. The protein localises to the cilium membrane. Functionally, G-protein coupled receptor. Has been shown to bind the neuroprotective and glioprotective factor prosaposin (PSAP), leading to endocytosis followed by an ERK phosphorylation cascade. However, other studies have shown that prosaposin does not increase activity. It has been suggested that GPR37L1 is a constitutively active receptor which signals through the guanine nucleotide-binding protein G(s) subunit alpha. Participates in the regulation of postnatal cerebellar development by modulating the Shh pathway. Regulates baseline blood pressure in females and protects against cardiovascular stress in males. Mediates inhibition of astrocyte glutamate transporters and reduction in neuronal N-methyl-D-aspartate receptor activity. This chain is G-protein coupled receptor 37-like 1 (Gpr37l1), found in Rattus norvegicus (Rat).